The following is a 426-amino-acid chain: Histidinol dehydrogenase (426 aa).

The NAD(+) site is built by Tyr130, Gln187, and Asn210. Residues Ser233, Gln255, and His258 each contribute to the substrate site. 2 residues coordinate Zn(2+): Gln255 and His258. Catalysis depends on proton acceptor residues Glu323 and His324. His324, Asp357, Glu411, and His416 together coordinate substrate. Position 357 (Asp357) interacts with Zn(2+). His416 contributes to the Zn(2+) binding site.

This sequence belongs to the histidinol dehydrogenase family. It depends on Zn(2+) as a cofactor.

It catalyses the reaction L-histidinol + 2 NAD(+) + H2O = L-histidine + 2 NADH + 3 H(+). Its pathway is amino-acid biosynthesis; L-histidine biosynthesis; L-histidine from 5-phospho-alpha-D-ribose 1-diphosphate: step 9/9. Functionally, catalyzes the sequential NAD-dependent oxidations of L-histidinol to L-histidinaldehyde and then to L-histidine. This chain is Histidinol dehydrogenase (hisD), found in Aquifex aeolicus (strain VF5).